Reading from the N-terminus, the 295-residue chain is MKKVLIGFASIAMAFTLAACGNKTVATTSGGKITQDEYYSSLKNTTSGKQVLQEMIVNKVLEKQYGDKVSKKTVTKQYNSYKDQYGSSFKSILSSNGMTTSSLKTQIRSNLLLKEAVKANDKISNADLKKEWKSYEPKVTVAQILVSKKSTAEDIIKKLNDGGDFTKLAKQYSTDSSTKNKGGKIAAFDDTNSTLDSSFKKAAFKLDEGKYTTTPVKTEYGYQVIKMINKPSKGKMSDHTKELKERIWNADMSDSTTLRSVITKVLKKGNVTIKDKDLKNVLDDYLGSSASSSTK.

Residues 1-19 form the signal peptide; it reads MKKVLIGFASIAMAFTLAA. Residue Cys-20 is the site of N-palmitoyl cysteine attachment. Cys-20 carries S-diacylglycerol cysteine lipidation. Positions 136–229 constitute a PpiC domain; the sequence is EPKVTVAQIL…YGYQVIKMIN (94 aa).

It belongs to the PrsA family.

The protein resides in the cell membrane. The enzyme catalyses [protein]-peptidylproline (omega=180) = [protein]-peptidylproline (omega=0). Plays a major role in protein secretion by helping the post-translocational extracellular folding of several secreted proteins. The protein is Foldase protein PrsA of Pediococcus pentosaceus (strain ATCC 25745 / CCUG 21536 / LMG 10740 / 183-1w).